A 390-amino-acid polypeptide reads, in one-letter code: Protein TAB2 homolog, chloroplastic (390 aa).

Residues 1–69 constitute a chloroplast transit peptide; it reads MTTATAIVAG…RSISSESSTE (69 aa). Residues 16-85 form a disordered region; it reads RRSLPLPNPP…IADEEVEAEN (70 aa). Residues 61–75 show a composition bias toward low complexity; that stretch reads SISSESSTEASAAAD.

The protein localises to the plastid. Its subcellular location is the chloroplast. Nuclear genome-encoded factor involved in the biogenesis of photosystem I (PSI). Required for the accumulation of PSI during plant development. Does not seem to be required for the translation of mRNAs of the PSI subunits. In Zea mays (Maize), this protein is Protein TAB2 homolog, chloroplastic.